Consider the following 219-residue polypeptide: MGQKIHPLGFRLGFIQEHYSHWFAKANSYSELLQEDKEIRSCIYNHIRNHVRNSSNYGGIARINIYRRTDLVQLQIHTGFPALLIENRIRGLEHLRRDIQEKIDHKKRKLRMTLVEVLKPYTEPTILAEYIALQLENRVAFRRVMKKAIQLAKISDIKGIKIQIAGRLNGAEIARNEWIQKGRLPLQMLRANIHYCHYPAHTIYGVLGIKVWIFREKII.

Residues 47 to 118 (IRNHVRNSSN…KLRMTLVEVL (72 aa)) form the KH type-2 domain.

The protein belongs to the universal ribosomal protein uS3 family. As to quaternary structure, part of the 30S ribosomal subunit.

The protein resides in the plastid. The protein localises to the chloroplast. The polypeptide is Small ribosomal subunit protein uS3c (rps3) (Chara vulgaris (Common stonewort)).